Reading from the N-terminus, the 221-residue chain is Endo-1,4-beta-xylanase 11A (221 aa).

Residues M1–A18 form the signal peptide. Positions S23–S220 constitute a GH11 domain. The Nucleophile role is filled by E111. N117 carries an N-linked (GlcNAc...) asparagine glycan. E207 (proton donor) is an active-site residue.

The protein belongs to the glycosyl hydrolase 11 (cellulase G) family.

It localises to the secreted. It carries out the reaction Endohydrolysis of (1-&gt;4)-beta-D-xylosidic linkages in xylans.. Its pathway is glycan degradation; xylan degradation. Functionally, endo-1,4-beta-xylanase involved in the hydrolysis of xylan, a major structural heterogeneous polysaccharide found in plant biomass representing the second most abundant polysaccharide in the biosphere, after cellulose. This is Endo-1,4-beta-xylanase 11A (XYN11A) from Mycosarcoma maydis (Corn smut fungus).